A 364-amino-acid chain; its full sequence is MPHPYPALTPEQKKELSDIAHRIVAPGKGILAADESTGSIAKRLQSIGTENTEENRRFYRQLLLTADDRVNPCIGGVILFHETLYQKADDGRPFPQVIKSKGGVVGIKVDKGVVPLAGTNGETTTQGLDGLSERCAQYKKDGADFAKWRCVLKIGEHTPSALAIMENANVLARYASICQQNGIVPIVEPEILPDGDHDLKRCQYVTEKVLAAVYKALSDHHVYLEGTLLKPNMVTPGHACTQKFSNEEIAMATVTALRRTVPPAVTGVTFLSGGQSEEEASINLNAINKCPLLKPWALTFSYGRALQASALKAWGGKKENLKAAQEEYIKRALANSLACQGKYTPSGQSGAAASESLFISNHAY.

Position 5 is a phosphotyrosine (tyrosine 5). Threonine 9 carries the phosphothreonine modification. Residues serine 36 and serine 39 each carry the phosphoserine modification. An N6-acetyllysine; alternate modification is found at lysine 42. A Glycyl lysine isopeptide (Lys-Gly) (interchain with G-Cter in SUMO1); alternate cross-link involves residue lysine 42. Lysine 42 participates in a covalent cross-link: Glycyl lysine isopeptide (Lys-Gly) (interchain with G-Cter in SUMO2); alternate. Arginine 43 contributes to the beta-D-fructose 1,6-bisphosphate binding site. Serine 46 bears the Phosphoserine mark. An N6-(2-hydroxyisobutyryl)lysine modification is found at lysine 99. Lysine 108 is modified (N6-acetyllysine). N6-acetyllysine; alternate is present on lysine 111. An N6-malonyllysine; alternate modification is found at lysine 111. Serine 132 is subject to Phosphoserine. Lysine 147 carries the post-translational modification N6-(2-hydroxyisobutyryl)lysine. Glutamate 188 functions as the Proton acceptor in the catalytic mechanism. Lysine 230 acts as the Schiff-base intermediate with dihydroxyacetone-P in catalysis. Serine 272 is modified (phosphoserine). Beta-D-fructose 1,6-bisphosphate-binding positions include 272–274 (SGG), serine 301, and arginine 304. N6-malonyllysine is present on lysine 312. At lysine 330 the chain carries N6-acetyllysine.

It belongs to the class I fructose-bisphosphate aldolase family. In terms of assembly, homotetramer. Interacts with SNX9 and WAS. Interacts with FBP2; the interaction blocks FBP2 inhibition by physiological concentrations of AMP and reduces inhibition by Ca(2+).

It localises to the cytoplasm. The protein resides in the myofibril. It is found in the sarcomere. The protein localises to the i band. Its subcellular location is the m line. The catalysed reaction is beta-D-fructose 1,6-bisphosphate = D-glyceraldehyde 3-phosphate + dihydroxyacetone phosphate. Its pathway is carbohydrate degradation; glycolysis; D-glyceraldehyde 3-phosphate and glycerone phosphate from D-glucose: step 4/4. In terms of biological role, catalyzes the reversible conversion of beta-D-fructose 1,6-bisphosphate (FBP) into two triose phosphate and plays a key role in glycolysis and gluconeogenesis. In addition, may also function as scaffolding protein. The chain is Fructose-bisphosphate aldolase A (Aldoa) from Mus musculus (Mouse).